The primary structure comprises 576 residues: Arginine--tRNA ligase (576 aa).

Positions 126–136 (ANPTGPMHIGH) match the 'HIGH' region motif.

Belongs to the class-I aminoacyl-tRNA synthetase family. Monomer.

The protein localises to the cytoplasm. The enzyme catalyses tRNA(Arg) + L-arginine + ATP = L-arginyl-tRNA(Arg) + AMP + diphosphate. The chain is Arginine--tRNA ligase from Rickettsia peacockii (strain Rustic).